The primary structure comprises 325 residues: MSTELDFEKPIRDLKGKIEELRTFTEEKEIDLSDEIEKLEKRLHALEENIYGNLKPWQRVQIARHGERPTTLDYIEQLFSDFLEMHGDRLYGDDEAIVAGIAKYKGQPVTVIGHQRGKDTKENIRRNFGMPHPEGYRKALRLMKQAEKFHRPVICFIDTKGAYPGKAAEERGQSEAIARNLLEMAGLKVPIVCIVIGEGGSGGALALGVGDRIHMLENSTYSVISPEGAAALLWKDASQAQRAAETMKITAPDLKELQIIDDIIPEVRGGAHRNVAEQAEAIDQVLEKSLKQLSSLTTEELLNKRYEKYKKIGEFSHVNDAISVN.

The region spanning 38 to 292 (KLEKRLHALE…DQVLEKSLKQ (255 aa)) is the CoA carboxyltransferase C-terminal domain.

The protein belongs to the AccA family. As to quaternary structure, acetyl-CoA carboxylase is a heterohexamer composed of biotin carboxyl carrier protein (AccB), biotin carboxylase (AccC) and two subunits each of ACCase subunit alpha (AccA) and ACCase subunit beta (AccD).

It localises to the cytoplasm. The catalysed reaction is N(6)-carboxybiotinyl-L-lysyl-[protein] + acetyl-CoA = N(6)-biotinyl-L-lysyl-[protein] + malonyl-CoA. It functions in the pathway lipid metabolism; malonyl-CoA biosynthesis; malonyl-CoA from acetyl-CoA: step 1/1. Its function is as follows. Component of the acetyl coenzyme A carboxylase (ACC) complex. First, biotin carboxylase catalyzes the carboxylation of biotin on its carrier protein (BCCP) and then the CO(2) group is transferred by the carboxyltransferase to acetyl-CoA to form malonyl-CoA. This is Acetyl-coenzyme A carboxylase carboxyl transferase subunit alpha from Halalkalibacterium halodurans (strain ATCC BAA-125 / DSM 18197 / FERM 7344 / JCM 9153 / C-125) (Bacillus halodurans).